The following is a 624-amino-acid chain: Phosphomethylpyrimidine synthase (624 aa).

Residues 48–70 (SDTHTSQGREKNPPLTVYDTSGP) form a disordered region. Substrate is bound by residues Asn-229, Met-258, Tyr-287, His-323, 343 to 345 (SRG), 384 to 387 (DGLR), and Glu-423. His-427 is a Zn(2+) binding site. Tyr-450 is a substrate binding site. A Zn(2+)-binding site is contributed by His-491. [4Fe-4S] cluster is bound by residues Cys-571, Cys-574, and Cys-579.

It belongs to the ThiC family. In terms of assembly, homodimer. Requires [4Fe-4S] cluster as cofactor.

It catalyses the reaction 5-amino-1-(5-phospho-beta-D-ribosyl)imidazole + S-adenosyl-L-methionine = 4-amino-2-methyl-5-(phosphooxymethyl)pyrimidine + CO + 5'-deoxyadenosine + formate + L-methionine + 3 H(+). Its pathway is cofactor biosynthesis; thiamine diphosphate biosynthesis. Its function is as follows. Catalyzes the synthesis of the hydroxymethylpyrimidine phosphate (HMP-P) moiety of thiamine from aminoimidazole ribotide (AIR) in a radical S-adenosyl-L-methionine (SAM)-dependent reaction. In Nitrosococcus oceani (strain ATCC 19707 / BCRC 17464 / JCM 30415 / NCIMB 11848 / C-107), this protein is Phosphomethylpyrimidine synthase.